The following is a 63-amino-acid chain: Cecropin-1/3 (63 aa).

Residues 1 to 23 (MNFYKVFIFVALILAISLGQSEA) form the signal peptide. Arg-62 is subject to Arginine amide.

This sequence belongs to the cecropin family.

Its subcellular location is the secreted. Its function is as follows. Cecropins have lytic and antibacterial activity against several Gram-positive and Gram-negative bacteria. This chain is Cecropin-1/3 (Cec1), found in Drosophila virilis (Fruit fly).